We begin with the raw amino-acid sequence, 351 residues long: Nicotinate-nucleotide--dimethylbenzimidazole phosphoribosyltransferase (351 aa).

Residue Glu-313 is the Proton acceptor of the active site.

It belongs to the CobT family.

The enzyme catalyses 5,6-dimethylbenzimidazole + nicotinate beta-D-ribonucleotide = alpha-ribazole 5'-phosphate + nicotinate + H(+). Its pathway is nucleoside biosynthesis; alpha-ribazole biosynthesis; alpha-ribazole from 5,6-dimethylbenzimidazole: step 1/2. In terms of biological role, catalyzes the synthesis of alpha-ribazole-5'-phosphate from nicotinate mononucleotide (NAMN) and 5,6-dimethylbenzimidazole (DMB). This Mycobacterium leprae (strain Br4923) protein is Nicotinate-nucleotide--dimethylbenzimidazole phosphoribosyltransferase.